The following is a 235-amino-acid chain: Octanoyltransferase (235 aa).

Positions aspartate 44–asparagine 231 constitute a BPL/LPL catalytic domain. Substrate is bound by residues arginine 83–histidine 90, serine 150–glycine 152, and glycine 163–alanine 165. Cysteine 181 (acyl-thioester intermediate) is an active-site residue.

The protein belongs to the LipB family.

The protein resides in the cytoplasm. The catalysed reaction is octanoyl-[ACP] + L-lysyl-[protein] = N(6)-octanoyl-L-lysyl-[protein] + holo-[ACP] + H(+). The protein operates within protein modification; protein lipoylation via endogenous pathway; protein N(6)-(lipoyl)lysine from octanoyl-[acyl-carrier-protein]: step 1/2. Its function is as follows. Catalyzes the transfer of endogenously produced octanoic acid from octanoyl-acyl-carrier-protein onto the lipoyl domains of lipoate-dependent enzymes. Lipoyl-ACP can also act as a substrate although octanoyl-ACP is likely to be the physiological substrate. This chain is Octanoyltransferase, found in Colwellia psychrerythraea (strain 34H / ATCC BAA-681) (Vibrio psychroerythus).